A 500-amino-acid polypeptide reads, in one-letter code: ATP synthase subunit alpha (500 aa).

169–176 is an ATP binding site; sequence GDRQTGKT.

Belongs to the ATPase alpha/beta chains family. F-type ATPases have 2 components, CF(1) - the catalytic core - and CF(0) - the membrane proton channel. CF(1) has five subunits: alpha(3), beta(3), gamma(1), delta(1), epsilon(1). CF(0) has three main subunits: a(1), b(2) and c(9-12). The alpha and beta chains form an alternating ring which encloses part of the gamma chain. CF(1) is attached to CF(0) by a central stalk formed by the gamma and epsilon chains, while a peripheral stalk is formed by the delta and b chains.

The protein resides in the cell membrane. It carries out the reaction ATP + H2O + 4 H(+)(in) = ADP + phosphate + 5 H(+)(out). Its function is as follows. Produces ATP from ADP in the presence of a proton gradient across the membrane. The alpha chain is a regulatory subunit. This is ATP synthase subunit alpha from Lactococcus lactis subsp. cremoris (strain MG1363).